The primary structure comprises 517 residues: tRNA-2-methylthio-N(6)-dimethylallyladenosine synthase (517 aa).

Residues 29–146 (RTYQVRTYGC…LPTLLERARH (118 aa)) form the MTTase N-terminal domain. Cys38, Cys75, Cys109, Cys183, Cys187, and Cys190 together coordinate [4Fe-4S] cluster. The Radical SAM core domain occupies 169–405 (RESAYAAWVS…VELQESISLQ (237 aa)). A TRAM domain is found at 408–475 (QALVGQTVEL…PHHLIADAGV (68 aa)).

Belongs to the methylthiotransferase family. MiaB subfamily. As to quaternary structure, monomer. It depends on [4Fe-4S] cluster as a cofactor.

It localises to the cytoplasm. It catalyses the reaction N(6)-dimethylallyladenosine(37) in tRNA + (sulfur carrier)-SH + AH2 + 2 S-adenosyl-L-methionine = 2-methylsulfanyl-N(6)-dimethylallyladenosine(37) in tRNA + (sulfur carrier)-H + 5'-deoxyadenosine + L-methionine + A + S-adenosyl-L-homocysteine + 2 H(+). Functionally, catalyzes the methylthiolation of N6-(dimethylallyl)adenosine (i(6)A), leading to the formation of 2-methylthio-N6-(dimethylallyl)adenosine (ms(2)i(6)A) at position 37 in tRNAs that read codons beginning with uridine. This chain is tRNA-2-methylthio-N(6)-dimethylallyladenosine synthase, found in Mycolicibacterium paratuberculosis (strain ATCC BAA-968 / K-10) (Mycobacterium paratuberculosis).